The primary structure comprises 285 residues: Eukaryotic translation initiation factor 3 subunit F-2 (285 aa).

An MPN domain is found at 11 to 145 (VLIKPLVLFQ…TRLYCAVEIG (135 aa)).

Belongs to the eIF-3 subunit F family. In terms of assembly, component of the eukaryotic translation initiation factor 3 (eIF-3) complex. The eIF-3 complex interacts with pix.

The protein resides in the cytoplasm. In terms of biological role, component of the eukaryotic translation initiation factor 3 (eIF-3) complex, which is involved in protein synthesis of a specialized repertoire of mRNAs and, together with other initiation factors, stimulates binding of mRNA and methionyl-tRNAi to the 40S ribosome. The eIF-3 complex specifically targets and initiates translation of a subset of mRNAs involved in cell proliferation. The chain is Eukaryotic translation initiation factor 3 subunit F-2 from Drosophila erecta (Fruit fly).